Here is an 876-residue protein sequence, read N- to C-terminus: DDB1- and CUL4-associated factor 6 (876 aa).

WD repeat units lie at residues 49 to 88 (VHDG…VLTT), 92 to 133 (GHRA…ETNR), 139 to 179 (CHYG…SCTK), 189 to 229 (NCRR…TRAT), and 251 to 290 (NKSC…AREL). 2 stretches are compositionally biased toward basic and acidic residues: residues 288–303 (RELK…EELR) and 312–334 (LRGD…RDGE). 5 disordered regions span residues 288 to 340 (RELK…PNVS), 355 to 391 (EASE…SSPN), 408 to 485 (LQPS…TEGT), 498 to 645 (WSST…NPEL), and 658 to 691 (EDPS…GPGD). Ser336 is modified (phosphoserine). Polar residues-rich tracts occupy residues 375-391 (TNQP…SSPN) and 409-422 (QPST…QAQA). Residues 456 to 466 (HQSDNSNERLS) show a composition bias toward basic and acidic residues. Over residues 499–510 (SSTASSSRGNGS) the composition is skewed to low complexity. The segment covering 534 to 544 (SETRAPEELSE) has biased composition (basic and acidic residues). Composition is skewed to polar residues over residues 550-562 (ENLT…TAQL), 571-584 (DSNS…SQDS), 603-613 (EQASTESATRH), and 621-645 (PSQT…NPEL). Ser665 bears the Phosphoserine mark. Thr670 is modified (phosphothreonine). A Phosphoserine modification is found at Ser673. One can recognise an IQ domain in the interval 692–721 (RRSAVARIQEFFRRRKERKEMEELDTLNIR). WD repeat units lie at residues 734–772 (NSRT…HLML) and 775–814 (ADNH…RIFN). A phosphoserine mark is found at Ser863 and Ser866.

Interacts with the nuclear receptors NR3C1 and AR in the presence of ligand. Interacts with DDB1, CUL4A and CUL4B.

The protein localises to the nucleus. It participates in protein modification; protein ubiquitination. Ligand-dependent coactivator of nuclear receptors. Enhance transcriptional activity of the nuclear receptors NR3C1 and AR. May function as a substrate receptor for CUL4-DDB1 E3 ubiquitin-protein ligase complex. This chain is DDB1- and CUL4-associated factor 6 (Dcaf6), found in Mus musculus (Mouse).